A 375-amino-acid polypeptide reads, in one-letter code: PGHPPGIDTPNPQWFWTLLQRNQMPARLLSKEDIETITAIKRFSDEYSAINFINLTPNNIGELAQFYFANLVLKYCDHSQYFINGLTAIVVGSRRPRDPAAVLAWIDRTINGAADVEPAAQEVLQRLGSNPAAWTGTFTSTNMVRYVMDQRPMVVIGLSISKYNGSAGNNRVFQAGNWNGLNGGKNVCPLMAFDRTRRFVLACPRVGFTCEAGGFGTGVRENTLSEQVRGIVSEGGPMVQTAVFAAVLHALGARTQHLAVDDWIGLVDDEFLAASLDALNATVVDQFGEWSVEAAQELVKNMEAQTTAGAVAAGEGAFDFGACVGDTPQQSTSAFNGGLAMAAAPAGQKRSLPDDILFDMGAPPEKKSGLTFDML.

The protein belongs to the herpesviridae DNA-binding protein family.

It is found in the host nucleus. Functionally, single-stranded DNA-binding protein required for DNA replication. In Equine herpesvirus 1 (strain HVS25A) (EHV-1), this protein is Major DNA-binding protein.